Consider the following 523-residue polypeptide: Putative UDP-glucuronosyltransferase ugt-50 (523 aa).

The first 25 residues, 1–25 (MHYSQMRWMFFCLTALLHGSFIVNA), serve as a signal peptide directing secretion. Residues asparagine 84, asparagine 248, asparagine 283, and asparagine 487 are each glycosylated (N-linked (GlcNAc...) asparagine). Residues 490–508 (IIEHNHLDLFFYLCIISLL) form a helical membrane-spanning segment.

It belongs to the UDP-glycosyltransferase family.

Its subcellular location is the membrane. It catalyses the reaction glucuronate acceptor + UDP-alpha-D-glucuronate = acceptor beta-D-glucuronoside + UDP + H(+). This Caenorhabditis elegans protein is Putative UDP-glucuronosyltransferase ugt-50 (ugt-50).